We begin with the raw amino-acid sequence, 180 residues long: Adenine phosphoribosyltransferase (180 aa).

The protein belongs to the purine/pyrimidine phosphoribosyltransferase family. As to quaternary structure, homodimer.

It is found in the cytoplasm. The enzyme catalyses AMP + diphosphate = 5-phospho-alpha-D-ribose 1-diphosphate + adenine. The protein operates within purine metabolism; AMP biosynthesis via salvage pathway; AMP from adenine: step 1/1. In terms of biological role, catalyzes a salvage reaction resulting in the formation of AMP, that is energically less costly than de novo synthesis. In Rhizobium johnstonii (strain DSM 114642 / LMG 32736 / 3841) (Rhizobium leguminosarum bv. viciae), this protein is Adenine phosphoribosyltransferase.